Consider the following 38-residue polypeptide: Photosystem II reaction center protein L (38 aa).

A helical membrane pass occupies residues 17-37 (SLYWGLLLIFVLAVLFSNYFF).

Belongs to the PsbL family. As to quaternary structure, PSII is composed of 1 copy each of membrane proteins PsbA, PsbB, PsbC, PsbD, PsbE, PsbF, PsbH, PsbI, PsbJ, PsbK, PsbL, PsbM, PsbT, PsbX, PsbY, PsbZ, Psb30/Ycf12, at least 3 peripheral proteins of the oxygen-evolving complex and a large number of cofactors. It forms dimeric complexes.

It is found in the plastid. It localises to the chloroplast thylakoid membrane. In terms of biological role, one of the components of the core complex of photosystem II (PSII). PSII is a light-driven water:plastoquinone oxidoreductase that uses light energy to abstract electrons from H(2)O, generating O(2) and a proton gradient subsequently used for ATP formation. It consists of a core antenna complex that captures photons, and an electron transfer chain that converts photonic excitation into a charge separation. This subunit is found at the monomer-monomer interface and is required for correct PSII assembly and/or dimerization. The protein is Photosystem II reaction center protein L of Gnetum gnemon (Spanish joint-fir).